We begin with the raw amino-acid sequence, 289 residues long: Acetylglutamate kinase (289 aa).

Substrate contacts are provided by residues 65–66, Arg-87, and Asn-187; that span reads GG.

Belongs to the acetylglutamate kinase family. ArgB subfamily.

It is found in the cytoplasm. It carries out the reaction N-acetyl-L-glutamate + ATP = N-acetyl-L-glutamyl 5-phosphate + ADP. Its pathway is amino-acid biosynthesis; L-arginine biosynthesis; N(2)-acetyl-L-ornithine from L-glutamate: step 2/4. Catalyzes the ATP-dependent phosphorylation of N-acetyl-L-glutamate. This chain is Acetylglutamate kinase, found in Chromobacterium violaceum (strain ATCC 12472 / DSM 30191 / JCM 1249 / CCUG 213 / NBRC 12614 / NCIMB 9131 / NCTC 9757 / MK).